Here is a 282-residue protein sequence, read N- to C-terminus: sn-glycerol-3-phosphate transport system permease protein UgpE (282 aa).

A run of 6 helical transmembrane segments spans residues 14–34, 86–106, 112–132, 146–168, 201–221, and 248–268; these read LMLV…FIAS, LAIA…IVFF, MGFF…RILP, YAGL…QFFL, IAAL…WPLL, and WNYV…VVVL. The ABC transmembrane type-1 domain maps to 78 to 269; that stretch reads LFNSFVVALA…IPPVMVVVLM (192 aa).

It belongs to the binding-protein-dependent transport system permease family. The complex is composed of two ATP-binding proteins (UgpC), two transmembrane proteins (UgpA and UgpE) and a solute-binding protein (UgpB).

The protein resides in the cell inner membrane. Functionally, part of the ABC transporter complex UgpBAEC involved in sn-glycerol-3-phosphate (G3P) import. Probably responsible for the translocation of the substrate across the membrane. The protein is sn-glycerol-3-phosphate transport system permease protein UgpE (ugpE) of Agrobacterium fabrum (strain C58 / ATCC 33970) (Agrobacterium tumefaciens (strain C58)).